The following is a 290-amino-acid chain: 33 kDa chaperonin (290 aa).

Intrachain disulfides connect C235/C237 and C268/C271.

This sequence belongs to the HSP33 family. In terms of processing, under oxidizing conditions two disulfide bonds are formed involving the reactive cysteines. Under reducing conditions zinc is bound to the reactive cysteines and the protein is inactive.

The protein resides in the cytoplasm. Redox regulated molecular chaperone. Protects both thermally unfolding and oxidatively damaged proteins from irreversible aggregation. Plays an important role in the bacterial defense system toward oxidative stress. The polypeptide is 33 kDa chaperonin (Streptococcus pyogenes serotype M18 (strain MGAS8232)).